The chain runs to 229 residues: tRNA (guanine-N(7)-)-methyltransferase (229 aa).

S-adenosyl-L-methionine is bound by residues glutamate 59, glutamate 84, aspartate 111, and aspartate 134. Aspartate 134 is an active-site residue. Lysine 138 contributes to the substrate binding site. Residues 140 to 145 (KHNKRR) form an interaction with RNA region. Residues aspartate 170 and 207–210 (TKFE) contribute to the substrate site.

The protein belongs to the class I-like SAM-binding methyltransferase superfamily. TrmB family.

The catalysed reaction is guanosine(46) in tRNA + S-adenosyl-L-methionine = N(7)-methylguanosine(46) in tRNA + S-adenosyl-L-homocysteine. It functions in the pathway tRNA modification; N(7)-methylguanine-tRNA biosynthesis. Catalyzes the formation of N(7)-methylguanine at position 46 (m7G46) in tRNA. This chain is tRNA (guanine-N(7)-)-methyltransferase, found in Saccharophagus degradans (strain 2-40 / ATCC 43961 / DSM 17024).